We begin with the raw amino-acid sequence, 223 residues long: Ribose-5-phosphate isomerase A (223 aa).

Residues 29–32 (TGST), 82–85 (DGAD), and 95–98 (KGGG) contribute to the substrate site. E104 functions as the Proton acceptor in the catalytic mechanism. K122 is a binding site for substrate.

The protein belongs to the ribose 5-phosphate isomerase family. Homodimer.

The enzyme catalyses aldehydo-D-ribose 5-phosphate = D-ribulose 5-phosphate. The protein operates within carbohydrate degradation; pentose phosphate pathway; D-ribose 5-phosphate from D-ribulose 5-phosphate (non-oxidative stage): step 1/1. In terms of biological role, catalyzes the reversible conversion of ribose-5-phosphate to ribulose 5-phosphate. The chain is Ribose-5-phosphate isomerase A from Neisseria meningitidis serogroup B (strain ATCC BAA-335 / MC58).